The following is a 147-amino-acid chain: MFTGPIVAVGEYVEGLGEGRRYVSIPYYRREIERVIGARPFPGTFNVRVEREERESLRELASSYGYRIEPHGEYGGAWLYPCLVNGRPAWLVFPDLTEHRDQVELISETELRRELNVIHGDMVKIEVWGPSTWKLARRLTCGPSGGR.

Residue G15 to R20 participates in CDP binding. Mg(2+)-binding residues include T44 and N46. Residues T97 and E104 each contribute to the FMN site. Residue T109–R112 coordinates CDP.

Belongs to the archaeal riboflavin kinase family. Mg(2+) serves as cofactor.

The catalysed reaction is riboflavin + CTP = CDP + FMN + H(+). The protein operates within cofactor biosynthesis; FMN biosynthesis; FMN from riboflavin (CTP route): step 1/1. Its function is as follows. Catalyzes the CTP-dependent phosphorylation of riboflavin (vitamin B2) to form flavin mononucleotide (FMN). The polypeptide is Riboflavin kinase (Methanopyrus kandleri (strain AV19 / DSM 6324 / JCM 9639 / NBRC 100938)).